Here is a 279-residue protein sequence, read N- to C-terminus: Sperm acrosome membrane-associated protein 1 (279 aa).

Positions 1–29 (MKSRGAGCSARLLLTVGWLLLAGLQSTCG) are cleaved as a signal peptide. The Extracellular segment spans residues 30-221 (INVTAIQDPS…VIICIFVIFV (192 aa)). The N-linked (GlcNAc...) asparagine glycan is linked to Asn-31. The segment at 39–74 (SLAREGEGEPEGDEEPENDSETEKEPQAEAEDDSEG) is disordered. Acidic residues predominate over residues 46–58 (GEPEGDEEPENDS). A helical transmembrane segment spans residues 222-242 (LIFIIINWTAVKDFWAKASTT). Residues 243–279 (EIQSELSSMRYKDSTSLDQSPTDIPGHEDDALSEWNE) are Cytoplasmic-facing. Tyr-253 is subject to Phosphotyrosine. The tract at residues 253 to 279 (YKDSTSLDQSPTDIPGHEDDALSEWNE) is disordered. A phosphoserine mark is found at Ser-262 and Ser-275.

In terms of assembly, interacts with CYLC1; the interaction may be relevant for proper acrosome attachment to the nuclear envelope. In terms of processing, N-glycosylated.

The protein resides in the cytoplasmic vesicle. The protein localises to the secretory vesicle. It is found in the acrosome inner membrane. Functionally, plays a role in acrosome expansion and establishment of normal sperm morphology during spermatogenesis. Important for male fertility. This chain is Sperm acrosome membrane-associated protein 1 (SPACA1), found in Bos taurus (Bovine).